The following is a 378-amino-acid chain: REST corepressor 3 (378 aa).

The region spanning 1 to 83 (MRVGAEYQAR…KSLADLPNFT (83 aa)) is the ELM2 domain. The region spanning 84–135 (PFPDEWTVEDKVLFEQAFSFHGKSFHRIQQMLPDKTIASLVKYYYSWKKTRS) is the SANT domain. A disordered region spans residues 147 to 219 (LANRNNQGDS…SQRSKCRPPK (73 aa)). The span at 162-184 (EPHPMDGNDSDYDPKKEAKKEGN) shows a compositional bias: basic and acidic residues. A compositionally biased stretch (basic residues) spans 205 to 217 (QHRHHSQRSKCRP). A coiled-coil region spans residues 238-273 (ANTILRRLDMELISLKRQVQNAKQVNSALKQKMEGG). Residues 337-356 (TASSTSCCSCSPPSASAAPT) form a disordered region.

This sequence belongs to the CoREST family.

It is found in the nucleus. In terms of biological role, may act as a component of a corepressor complex that represses transcription. This Gallus gallus (Chicken) protein is REST corepressor 3 (RCOR3).